The following is a 240-amino-acid chain: ATP-dependent dethiobiotin synthetase BioD (240 aa).

An ATP-binding site is contributed by 12-17 (EIGKTV). T16 contributes to the Mg(2+) binding site. K37 is an active-site residue. S41 lines the substrate pocket. ATP-binding positions include D54, 115 to 118 (EGSG), 179 to 180 (NQ), and 207 to 209 (PYI). Mg(2+) is bound by residues D54 and E115.

The protein belongs to the dethiobiotin synthetase family. Homodimer. Requires Mg(2+) as cofactor.

It is found in the cytoplasm. The catalysed reaction is (7R,8S)-7,8-diammoniononanoate + CO2 + ATP = (4R,5S)-dethiobiotin + ADP + phosphate + 3 H(+). Its pathway is cofactor biosynthesis; biotin biosynthesis; biotin from 7,8-diaminononanoate: step 1/2. In terms of biological role, catalyzes a mechanistically unusual reaction, the ATP-dependent insertion of CO2 between the N7 and N8 nitrogen atoms of 7,8-diaminopelargonic acid (DAPA, also called 7,8-diammoniononanoate) to form a ureido ring. This chain is ATP-dependent dethiobiotin synthetase BioD, found in Clostridium acetobutylicum (strain ATCC 824 / DSM 792 / JCM 1419 / IAM 19013 / LMG 5710 / NBRC 13948 / NRRL B-527 / VKM B-1787 / 2291 / W).